The primary structure comprises 437 residues: Chloride intracellular channel protein 5 (437 aa).

The segment covering 1-14 has biased composition (polar residues); that stretch reads MNDENYSTTIYNRV. The tract at residues 1–197 is disordered; it reads MNDENYSTTI…VSEGNESASA (197 aa). Positions 34–45 are enriched in basic and acidic residues; sequence DEVHEDVRREDN. Repeat copies occupy residues 118–125, 126–133, 134–141, and 142–149. Positions 118–149 are 4 X 8 AA tandem repeats of [AGQ]-[SP]-D-[PS]-E-E-P-Q; sequence QSDSEEPQASDPEEPQASDPEEPQGPDPEEPQ. Residues 121-157 are compositionally biased toward acidic residues; it reads SEEPQASDPEEPQASDPEEPQGPDPEEPQENGNEMEA. Polar residues predominate over residues 161-184; the sequence is SPSSFTIQNSRAFSTREISPTSYS. Positions 217 to 220 match the G-site motif; the sequence is CPFS. The helical transmembrane segment at 219 to 239 threads the bilayer; that stretch reads FSQRLFMILWLKGVVFNVTTV. Residues 263–427 enclose the GST C-terminal domain; it reads NGDVKTDVNK…AADSEIELAY (165 aa).

Belongs to the chloride channel CLIC family. In terms of assembly, component of a multimeric complex consisting of several cytoskeletal proteins, including actin, ezrin, alpha-actinin, gelsolin, and IQGAP1. Interacts with AKAP9. Interacts with TPRN. TPRN, CLIC5 and PTPQR form concentric rings at the base of stereocilia and may form a complex. Interacts with EZR, MYO6 and RDX; the proteins may work together as a complex to stabilize linkages between the plasma membrane and subjacent actin cytoskeleton at the stereocilium base. Phosphorylated. Expressed in most tissues. Higher levels found in kidney, heart, skeletal muscle, T84 and PANC-1 cells.

It localises to the golgi apparatus. It is found in the cytoplasm. The protein resides in the cytoskeleton. Its subcellular location is the microtubule organizing center. The protein localises to the centrosome. It localises to the cell cortex. It is found in the membrane. The protein resides in the apical cell membrane. Its subcellular location is the mitochondrion. The protein localises to the cell projection. It localises to the stereocilium. It carries out the reaction Na(+)(in) = Na(+)(out). The enzyme catalyses K(+)(in) = K(+)(out). The catalysed reaction is chloride(in) = chloride(out). Inhibited by F-actin. In terms of biological role, in the soluble state, catalyzes glutaredoxin-like thiol disulfide exchange reactions with reduced glutathione as electron donor. Can insert into membranes and form non-selective ion channels almost equally permeable to Na(+), K(+) and Cl(-). Required for normal hearing. It is necessary for the formation of stereocilia in the inner ear and normal development of the organ of Corti. May play a role in the regulation of transepithelial ion absorption and secretion. Is required for the development and/or maintenance of the proper glomerular endothelial cell and podocyte architecture. Plays a role in formation of the lens suture in the eye, which is important for normal optical properties of the lens. The protein is Chloride intracellular channel protein 5 (CLIC5) of Bos taurus (Bovine).